The sequence spans 317 residues: MIIVTGAAGFIGSNLVKALNNLGRSDIIAVDDLTDGTKMFNLADCEIADYLDKADFIEQIAQGQFDGKVEVIFHQGACSSTTEWDGKFMMANNYEYSKTLLHFCERNGSQFIYASSASVYGGSDKFIEQRELEKPLNVYAYSKFLFDQYVRQHNFTTQVAGLRYFNVYGPREQHKGGMASVAFHFNNQIKASGICRLFQGHDGFEDGKQLRDFVYVEDVVKVNLWLWQNPGISGVYNCGTGQAQSFNDVANAVIAYHGKGEIEYIPFPDKLKGAYQSYTQADLTQLRAAGYTQAFKTVEEGVPEYLDWLAAQHFIGQ.

Residues 10-11, 31-32, Lys-38, Lys-53, 75-79, and Asn-92 contribute to the NADP(+) site; these read FI, DD, and QGACS. The active-site Proton acceptor is Tyr-139. Lys-143 contacts NADP(+). Asn-166 is a substrate binding site. The NADP(+) site is built by Val-167 and Lys-175. The Proton acceptor role is filled by Lys-175. Substrate-binding positions include Gly-177, His-184, 198–201, Arg-211, and Tyr-275; that span reads FQGH.

The protein belongs to the NAD(P)-dependent epimerase/dehydratase family. HldD subfamily. Homopentamer. NADP(+) is required as a cofactor.

It catalyses the reaction ADP-D-glycero-beta-D-manno-heptose = ADP-L-glycero-beta-D-manno-heptose. Its pathway is nucleotide-sugar biosynthesis; ADP-L-glycero-beta-D-manno-heptose biosynthesis; ADP-L-glycero-beta-D-manno-heptose from D-glycero-beta-D-manno-heptose 7-phosphate: step 4/4. Catalyzes the interconversion between ADP-D-glycero-beta-D-manno-heptose and ADP-L-glycero-beta-D-manno-heptose via an epimerization at carbon 6 of the heptose. This chain is ADP-L-glycero-D-manno-heptose-6-epimerase, found in Shewanella loihica (strain ATCC BAA-1088 / PV-4).